The sequence spans 347 residues: HTH-type transcriptional regulator PhcA (347 aa).

One can recognise an HTH lysR-type domain in the interval 1 to 61; the sequence is MVNVDTKLLV…IRVPHGLTPT (61 aa). The segment at residues 21–40 is a DNA-binding region (H-T-H motif); that stretch reads ATYVAEKMHMTAPAVSHSLG. The tract at residues 316 to 347 is disordered; it reads PMHPPMLTDDSGKSGKTGKGDAEKEDESRLSV. Basic and acidic residues predominate over residues 325–347; sequence DSGKSGKTGKGDAEKEDESRLSV.

The protein belongs to the LysR transcriptional regulatory family.

Functionally, regulates the transcription of one or more of the genes involved in virulence. The protein is HTH-type transcriptional regulator PhcA (phcA) of Ralstonia nicotianae (strain ATCC BAA-1114 / GMI1000) (Ralstonia solanacearum).